A 384-amino-acid chain; its full sequence is Probable peptidoglycan glycosyltransferase FtsW (384 aa).

Residues 1–19 (MAAVWRWFVPERPSFYDRG) lie on the Cytoplasmic side of the membrane. A helical membrane pass occupies residues 20-40 (LLALTFSLMGIGLMMVASASI). The Periplasmic portion of the chain corresponds to 41-54 (KEGPGGDMFYFTKR). Residues 55–75 (HLIFLFVCLGIGVGTLYLPLE) form a helical membrane-spanning segment. The Cytoplasmic portion of the chain corresponds to 76 to 83 (RWREWSGR). A helical transmembrane segment spans residues 84 to 104 (LLVGALGLLFAVLAVGRTVNG). Over 105-110 (AKRWIG) the chain is Periplasmic. Residues 111–131 (FGFFNIQPAELAKLALIVFIA) traverse the membrane as a helical segment. Residues 132-143 (SYLVRRSDEVRG) lie on the Cytoplasmic side of the membrane. A helical transmembrane segment spans residues 144–164 (NIAGFVKPLAVVFLLAIMLLA). Residues 165-166 (QP) are Periplasmic-facing. Residues 167 to 187 (DLGSVVVLFVCTFGLLFIGGA) traverse the membrane as a helical segment. Position 188 (K188) is a topological domain, cytoplasmic. Residues 189-209 (LVQFIAIIVAGLSALAGLIIY) traverse the membrane as a helical segment. Residues 210-267 (EPYRLRRVTSFLDPWADPFGSGYQLTQSLMAFGRGGFFGQGLGNSVQKLSYLPEAHTD) are Periplasmic-facing. Residues 268–288 (FVFAILGEELGYFGVLVVLFL) traverse the membrane as a helical segment. At 289–316 (QLLLAMKALQIGRTALLRSKFFEGYMAC) the chain is on the cytoplasmic side. The helical transmembrane segment at 317 to 337 (GIGIWFSFQTVVNVGAAAGML) threads the bilayer. The Periplasmic segment spans residues 338–343 (PTKGLT). A helical membrane pass occupies residues 344 to 364 (LPLVSYGGSSLIAITMAVAIL). The Cytoplasmic segment spans residues 365 to 384 (LRIDFERRLDTSHVIQREAA).

The protein belongs to the SEDS family. FtsW subfamily.

It localises to the cell inner membrane. The catalysed reaction is [GlcNAc-(1-&gt;4)-Mur2Ac(oyl-L-Ala-gamma-D-Glu-L-Lys-D-Ala-D-Ala)](n)-di-trans,octa-cis-undecaprenyl diphosphate + beta-D-GlcNAc-(1-&gt;4)-Mur2Ac(oyl-L-Ala-gamma-D-Glu-L-Lys-D-Ala-D-Ala)-di-trans,octa-cis-undecaprenyl diphosphate = [GlcNAc-(1-&gt;4)-Mur2Ac(oyl-L-Ala-gamma-D-Glu-L-Lys-D-Ala-D-Ala)](n+1)-di-trans,octa-cis-undecaprenyl diphosphate + di-trans,octa-cis-undecaprenyl diphosphate + H(+). Its pathway is cell wall biogenesis; peptidoglycan biosynthesis. Peptidoglycan polymerase that is essential for cell division. This chain is Probable peptidoglycan glycosyltransferase FtsW, found in Tolumonas auensis (strain DSM 9187 / NBRC 110442 / TA 4).